Here is a 387-residue protein sequence, read N- to C-terminus: Lymphocyte transmembrane adapter 1 (387 aa).

The Extracellular portion of the chain corresponds to 1-37 (MDVTTSAWSETTRRISEPSTLQGTLGSLDKAEDHSSS). The helical; Signal-anchor for type III membrane protein transmembrane segment at 38–58 (IFSGFAALLAILLVVAVICVL) threads the bilayer. At 59–387 (WCCGKRKKRQ…VCAAEAGARG (329 aa)) the chain is on the cytoplasmic side. The disordered stretch occupies residues 114–136 (VSTESLLSRNSDSPSSEHVPSRA). The span at 118 to 129 (SLLSRNSDSPSS) shows a compositional bias: low complexity. Y195 carries the post-translational modification Phosphotyrosine. Residues 230–268 (SEEIDEGCGNASDCTSLGSPGTENSDPLSDGEGSSQTSN) form a disordered region. Positions 241-268 (SDCTSLGSPGTENSDPLSDGEGSSQTSN) are enriched in polar residues. Y270 and Y296 each carry phosphotyrosine. Positions 294–387 (RDYENVPPGP…VCAAEAGARG (94 aa)) are disordered. Over residues 319–329 (DHVEGRTDGPE) the composition is skewed to basic and acidic residues. Residues 360–369 (PWEDAEETSS) show a composition bias toward acidic residues. Position 375 is a phosphotyrosine (Y375).

In terms of assembly, when phosphorylated, interacts with GRB2, PIK3R1 and GRAP2. Phosphorylated on tyrosines upon TCR or BCR activation; which leads to the recruitment of GRB2, PIK3R1 and GRAP2.

It is found in the cell membrane. In terms of biological role, negatively regulates TCR (T-cell antigen receptor)-mediated signaling in T-cells and BCR (B-cell antigen receptor)-mediated signaling in B-cells. The polypeptide is Lymphocyte transmembrane adapter 1 (LAX1) (Bos taurus (Bovine)).